A 312-amino-acid chain; its full sequence is HPr kinase/phosphorylase (312 aa).

Residues His139 and Lys160 contribute to the active site. Position 154-161 (154-161 (GSSGVGKS)) interacts with ATP. Ser161 lines the Mg(2+) pocket. Asp178 (proton acceptor; for phosphorylation activity. Proton donor; for dephosphorylation activity) is an active-site residue. Positions 202–211 (LEIRGLGIIN) are important for the catalytic mechanism of both phosphorylation and dephosphorylation. Residue Glu203 coordinates Mg(2+). Arg244 is an active-site residue. The important for the catalytic mechanism of dephosphorylation stretch occupies residues 265–270 (PVRPGR).

It belongs to the HPrK/P family. In terms of assembly, homohexamer. Mg(2+) is required as a cofactor.

It carries out the reaction [HPr protein]-L-serine + ATP = [HPr protein]-O-phospho-L-serine + ADP + H(+). The catalysed reaction is [HPr protein]-O-phospho-L-serine + phosphate + H(+) = [HPr protein]-L-serine + diphosphate. Functionally, catalyzes the ATP- as well as the pyrophosphate-dependent phosphorylation of a specific serine residue in HPr, a phosphocarrier protein of the phosphoenolpyruvate-dependent sugar phosphotransferase system (PTS). HprK/P also catalyzes the pyrophosphate-producing, inorganic phosphate-dependent dephosphorylation (phosphorolysis) of seryl-phosphorylated HPr (P-Ser-HPr). The two antagonistic activities of HprK/P are regulated by several intracellular metabolites, which change their concentration in response to the absence or presence of rapidly metabolisable carbon sources (glucose, fructose, etc.) in the growth medium. Therefore, by controlling the phosphorylation state of HPr, HPrK/P is a sensor enzyme that plays a major role in the regulation of carbon metabolism and sugar transport: it mediates carbon catabolite repression (CCR), and regulates PTS-catalyzed carbohydrate uptake and inducer exclusion. The chain is HPr kinase/phosphorylase from Listeria innocua serovar 6a (strain ATCC BAA-680 / CLIP 11262).